The primary structure comprises 1463 residues: Chitin binding domain (ChtBD2) containing chtb-1 (1463 aa).

The signal sequence occupies residues 1 to 17 (MLRNLILITLLVASGHG). Residues 70–99 (SSVPSVPAENTQPQQHPKARKPASPNICEQ) form a disordered region. The Chitin-binding type-2 domain occupies 94–164 (PNICEQDNGA…IVPKRMSSLS (71 aa)). An intrachain disulfide couples Cys-141 to Cys-154. Disordered regions lie at residues 720 to 773 (IDSD…DFPI) and 841 to 869 (KNPK…FPDS). Polar residues predominate over residues 722 to 734 (SDTNSTTNPSQPE). Composition is skewed to basic residues over residues 740 to 756 (NNTK…KPKK) and 843 to 853 (PKKRKTKRRKQ).

In Caenorhabditis elegans, this protein is Chitin binding domain (ChtBD2) containing chtb-1.